A 264-amino-acid chain; its full sequence is GTP cyclohydrolase FolE2 (264 aa).

The protein belongs to the GTP cyclohydrolase IV family.

It catalyses the reaction GTP + H2O = 7,8-dihydroneopterin 3'-triphosphate + formate + H(+). Its pathway is cofactor biosynthesis; 7,8-dihydroneopterin triphosphate biosynthesis; 7,8-dihydroneopterin triphosphate from GTP: step 1/1. Functionally, converts GTP to 7,8-dihydroneopterin triphosphate. This Ruthia magnifica subsp. Calyptogena magnifica protein is GTP cyclohydrolase FolE2.